The sequence spans 537 residues: Syncytin-2 (537 aa).

A signal peptide spans 1 to 15; that stretch reads MGLLLLVLILTPLLA. Over 16–478 the chain is Extracellular; that stretch reads AYRHPDFPLL…GWLNWEGTWK (463 aa). The CXXC motif lies at 43–46; the sequence is CWLC. Cystine bridges form between Cys43/Cys46, Cys43/Cys439, and Cys431/Cys438. Residues Asn133, Asn146, Asn177, Asn220, Asn241, Asn247, Asn312, and Asn332 are each glycosylated (N-linked (GlcNAc...) asparagine). The fusion peptide stretch occupies residues 354–374; the sequence is FIPLLAGLGILAGTGTGIAGI. The CKS-17 signature appears at 414 to 430; it reads LQNRRGLDMLTAAQGGI. The short motif at 431 to 439 is the CX6CC element; the sequence is CLALDEKCC. Asn443 carries N-linked (GlcNAc...) asparagine glycosylation. Residues 479–499 traverse the membrane as a helical segment; sequence WFSWVLPFIGPLVSLLLLLLF. At 500–537 the chain is on the cytoplasmic side; sequence GPCLLNLITQFVSSRLQAIKLQTNGAGCRPRNIQESPF.

This sequence belongs to the gamma type-C retroviral envelope protein family. HERV class-I FRD env subfamily. In terms of assembly, the surface and transmembrane proteins form a heterodimer. They are attached by non-covalent interactions or by a labile interchain disulfide bond. Specific enzymatic cleavages in vivo yield the mature SU and TM proteins. In terms of processing, the CXXC motif is highly conserved across a broad range of retroviral envelope proteins. It is thought to participate in the formation of a labile disulfide bond possibly with the CX6CC motif present in the transmembrane protein.

It localises to the virion. The protein resides in the cell membrane. In terms of biological role, this endogenous retroviral envelope protein has retained its original fusogenic properties and participates in trophoblast fusion and the formation of a syncytium during placenta morphogenesis. The interaction with MFSD2A is apparently important for this process. Endogenous envelope proteins may have kept, lost or modified their original function during evolution but this one can still make pseudotypes with MLV, HIV-1 or SIV-1 virions and confer infectivity. Retroviral envelope proteins mediate receptor recognition and membrane fusion during early infection. The surface protein mediates receptor recognition, while the transmembrane protein anchors the envelope heterodimer to the viral membrane through one transmembrane domain. The other hydrophobic domain, called fusion peptide, mediates fusion of the viral membrane with the target cell membrane. The chain is Syncytin-2 (ERVFRD-1) from Macaca fascicularis (Crab-eating macaque).